Consider the following 417-residue polypeptide: Gamma-glutamyl phosphate reductase (417 aa).

This sequence belongs to the gamma-glutamyl phosphate reductase family.

The protein resides in the cytoplasm. It catalyses the reaction L-glutamate 5-semialdehyde + phosphate + NADP(+) = L-glutamyl 5-phosphate + NADPH + H(+). It functions in the pathway amino-acid biosynthesis; L-proline biosynthesis; L-glutamate 5-semialdehyde from L-glutamate: step 2/2. Its function is as follows. Catalyzes the NADPH-dependent reduction of L-glutamate 5-phosphate into L-glutamate 5-semialdehyde and phosphate. The product spontaneously undergoes cyclization to form 1-pyrroline-5-carboxylate. This Aeromonas salmonicida (strain A449) protein is Gamma-glutamyl phosphate reductase.